Consider the following 581-residue polypeptide: Putative ABC transporter ATP-binding protein MM_1996 (581 aa).

Positions 10-250 constitute an ABC transporter 1 domain; sequence IEIRDLWYTY…LEVFHRLGLR (241 aa). Residue 44-51 coordinates ATP; that stretch reads GPTGCGKS. The segment at 287-309 is disordered; the sequence is GDYPASPGRKEKTSSPGWSSENN. Polar residues predominate over residues 300-309; it reads SSPGWSSENN. An ABC transporter 2 domain is found at 313–541; it reads VSVRDLWSGY…IDILRKASLT (229 aa). 346–353 serves as a coordination point for ATP; it reads GTNGSGKS.

Belongs to the ABC transporter superfamily.

The protein resides in the cell membrane. In terms of biological role, probably part of an ABC transporter complex. Responsible for energy coupling to the transport system. This is Putative ABC transporter ATP-binding protein MM_1996 from Methanosarcina mazei (strain ATCC BAA-159 / DSM 3647 / Goe1 / Go1 / JCM 11833 / OCM 88) (Methanosarcina frisia).